A 76-amino-acid polypeptide reads, in one-letter code: Small ribosomal subunit protein bS18 (76 aa).

Belongs to the bacterial ribosomal protein bS18 family. As to quaternary structure, part of the 30S ribosomal subunit. Forms a tight heterodimer with protein bS6.

In terms of biological role, binds as a heterodimer with protein bS6 to the central domain of the 16S rRNA, where it helps stabilize the platform of the 30S subunit. This is Small ribosomal subunit protein bS18 from Xylella fastidiosa (strain 9a5c).